Here is a 486-residue protein sequence, read N- to C-terminus: UDP-N-acetylmuramoyl-L-alanyl-D-glutamate--2,6-diaminopimelate ligase (486 aa).

Serine 30 lines the UDP-N-acetyl-alpha-D-muramoyl-L-alanyl-D-glutamate pocket. 111–117 is an ATP binding site; sequence GTNGKTT. Residues 153 to 154, serine 180, glutamine 186, and arginine 188 each bind UDP-N-acetyl-alpha-D-muramoyl-L-alanyl-D-glutamate; that span reads TT. Lysine 220 bears the N6-carboxylysine mark. Residues arginine 378, 402–405, glycine 455, and glutamate 459 contribute to the meso-2,6-diaminopimelate site; that span reads DNPR. The Meso-diaminopimelate recognition motif signature appears at 402 to 405; that stretch reads DNPR.

The protein belongs to the MurCDEF family. MurE subfamily. It depends on Mg(2+) as a cofactor. Carboxylation is probably crucial for Mg(2+) binding and, consequently, for the gamma-phosphate positioning of ATP.

It is found in the cytoplasm. It carries out the reaction UDP-N-acetyl-alpha-D-muramoyl-L-alanyl-D-glutamate + meso-2,6-diaminopimelate + ATP = UDP-N-acetyl-alpha-D-muramoyl-L-alanyl-gamma-D-glutamyl-meso-2,6-diaminopimelate + ADP + phosphate + H(+). The protein operates within cell wall biogenesis; peptidoglycan biosynthesis. Functionally, catalyzes the addition of meso-diaminopimelic acid to the nucleotide precursor UDP-N-acetylmuramoyl-L-alanyl-D-glutamate (UMAG) in the biosynthesis of bacterial cell-wall peptidoglycan. This chain is UDP-N-acetylmuramoyl-L-alanyl-D-glutamate--2,6-diaminopimelate ligase, found in Parabacteroides distasonis (strain ATCC 8503 / DSM 20701 / CIP 104284 / JCM 5825 / NCTC 11152).